Here is an 883-residue protein sequence, read N- to C-terminus: Alanine--tRNA ligase (883 aa).

Positions 560, 564, 665, and 669 each coordinate Zn(2+).

The protein belongs to the class-II aminoacyl-tRNA synthetase family. The cofactor is Zn(2+).

The protein localises to the cytoplasm. The catalysed reaction is tRNA(Ala) + L-alanine + ATP = L-alanyl-tRNA(Ala) + AMP + diphosphate. In terms of biological role, catalyzes the attachment of alanine to tRNA(Ala) in a two-step reaction: alanine is first activated by ATP to form Ala-AMP and then transferred to the acceptor end of tRNA(Ala). Also edits incorrectly charged Ser-tRNA(Ala) and Gly-tRNA(Ala) via its editing domain. This is Alanine--tRNA ligase from Mesomycoplasma hyopneumoniae (strain J / ATCC 25934 / NCTC 10110) (Mycoplasma hyopneumoniae).